We begin with the raw amino-acid sequence, 546 residues long: Thermolysin (546 aa).

An N-terminal signal peptide occupies residues 1–25 (MDKRAMLGAIGLAFGLMAWPFGASA). Positions 26 to 228 (KEKSMVWNEQ…EAKPGGGQPV (203 aa)) are cleaved as a propeptide — activation peptide. Residues Asp-287, Asp-289, Gln-291, and Asp-368 each contribute to the Ca(2+) site. His-372 contacts Zn(2+). The active site involves Glu-373. His-376 and Glu-396 together coordinate Zn(2+). The Ca(2+) site is built by Asn-413, Asp-415, Glu-417, Glu-420, Tyr-423, Thr-424, Ile-427, and Asp-430. Catalysis depends on His-461, which acts as the Proton donor.

The protein belongs to the peptidase M4 family. Requires Ca(2+) as cofactor. Zn(2+) serves as cofactor.

The protein resides in the secreted. The catalysed reaction is Preferential cleavage: Xaa-|-Leu &gt; Xaa-|-Phe.. Functionally, extracellular zinc metalloprotease. Has collagenase activity. The sequence is that of Thermolysin (npr) from Bacillus sp. (strain EA1).